Consider the following 608-residue polypeptide: Serine/threonine-protein kinase SSN3 (608 aa).

Residues 1 to 72 are disordered; that stretch reads MSYSSASFRK…PGTVGTRTSI (72 aa). Positions 17–47 are enriched in low complexity; sequence SQPSQTTTTTTSANQPQSQSQQQPLQQSQQQ. The span at 49–59 shows a compositional bias: basic residues; that stretch reads LHMKPNPHIPH. The region spanning 104–492 is the Protein kinase domain; it reads YQIMGYIAAG…ADQALLHPYF (389 aa). ATP is bound by residues 110-118 and lysine 182; that span reads IAAGTYGKV. The active-site Proton acceptor is aspartate 307. Residues 523–608 are disordered; it reads MTTAANNNNN…LPGGIRKKRG (86 aa). Low complexity predominate over residues 528 to 583; it reads NNNNNNNNNNNNNNNNNNNNNNNNNNNSGHQLSQQQNVQIQQVHQMQQQIHSQQLQ.

This sequence belongs to the protein kinase superfamily. CMGC Ser/Thr protein kinase family. CDC2/CDKX subfamily. In terms of assembly, component of the SRB8-11 complex, a regulatory module of the Mediator complex. It depends on Mg(2+) as a cofactor.

Its subcellular location is the nucleus. The enzyme catalyses L-seryl-[protein] + ATP = O-phospho-L-seryl-[protein] + ADP + H(+). The catalysed reaction is L-threonyl-[protein] + ATP = O-phospho-L-threonyl-[protein] + ADP + H(+). It carries out the reaction [DNA-directed RNA polymerase] + ATP = phospho-[DNA-directed RNA polymerase] + ADP + H(+). Its function is as follows. Component of the SRB8-11 complex. The SRB8-11 complex is a regulatory module of the Mediator complex which is itself involved in regulation of basal and activated RNA polymerase II-dependent transcription. The SRB8-11 complex may be involved in the transcriptional repression of a subset of genes regulated by Mediator. It may inhibit the association of the Mediator complex with RNA polymerase II to form the holoenzyme complex. The SRB8-11 complex phosphorylates the C-terminal domain (CTD) of the largest subunit of RNA polymerase II. The sequence is that of Serine/threonine-protein kinase SSN3 (SSN3) from Candida albicans (strain SC5314 / ATCC MYA-2876) (Yeast).